The following is a 91-amino-acid chain: Probable Fe(2+)-trafficking protein (91 aa).

This sequence belongs to the Fe(2+)-trafficking protein family. As to quaternary structure, monomer.

Its function is as follows. Could be a mediator in iron transactions between iron acquisition and iron-requiring processes, such as synthesis and/or repair of Fe-S clusters in biosynthetic enzymes. This chain is Probable Fe(2+)-trafficking protein, found in Cronobacter sakazakii (strain ATCC BAA-894) (Enterobacter sakazakii).